A 520-amino-acid polypeptide reads, in one-letter code: MSSDIHSEKILILDFGSQYTQLIARRVREAHVYCELHPFDMDLAAIRAFAPRGIILSGGPKSVYEEGAPAVEEALFELGVPVLGICYGMQLMSRHFGGQVVPAGKREFGHADLLAVGTPGPLFDGFFVEGKSPVWMSHGDHVSLVPAGFQVVGETANAPVCAIQDLARNLYGVQFHPEVNHTPRGELLIDTFVRKICGCSGQWTPGHIIDDAVSRIRAQVGNDRVILGLSGGVDSSVAAALIHRAIGDQLTCVFVDNGLLRLSEGDQVMATFAENLGVKVIRVDAEDRFLTALAGESDPEKKRKIIGKLFVDIFEEESNKITDARWLAQGTIYPDVIESAGAKTGKAHNIKSHHNVGGLPDYMKLKLLEPLRELFKDEVRAIGEELGLPHQMVWRHPFPGPGLGVRILGEVKKEYADILRRADAIYIEELYAAGHYDKISQAFAVFLPVKSVGVMGDGRTYEYVVALRAVETKDFMTAGWYPLPYEDMARISSRIINEVKGVNRVVYDISSKPPATIEWE.

A Glutamine amidotransferase type-1 domain is found at 9–202 (KILILDFGSQ…VRKICGCSGQ (194 aa)). The active-site Nucleophile is the Cys-86. Catalysis depends on residues His-176 and Glu-178. Positions 203–395 (WTPGHIIDDA…LGLPHQMVWR (193 aa)) constitute a GMPS ATP-PPase domain. 230-236 (SGGVDSS) is a binding site for ATP.

In terms of assembly, homodimer.

It catalyses the reaction XMP + L-glutamine + ATP + H2O = GMP + L-glutamate + AMP + diphosphate + 2 H(+). It functions in the pathway purine metabolism; GMP biosynthesis; GMP from XMP (L-Gln route): step 1/1. In terms of biological role, catalyzes the synthesis of GMP from XMP. The protein is GMP synthase [glutamine-hydrolyzing] of Geobacter metallireducens (strain ATCC 53774 / DSM 7210 / GS-15).